Reading from the N-terminus, the 28-residue chain is Cytochrome c oxidase subunit 5B, mitochondrial (28 aa).

This sequence belongs to the cytochrome c oxidase subunit 5B family. In terms of assembly, component of the cytochrome c oxidase (complex IV, CIV), a multisubunit enzyme composed of a catalytic core of 3 subunits and several supernumerary subunits. The complex exists as a monomer or a dimer and forms supercomplexes (SCs) in the inner mitochondrial membrane with ubiquinol-cytochrome c oxidoreductase (cytochrome b-c1 complex, complex III, CIII).

Its subcellular location is the mitochondrion inner membrane. It participates in energy metabolism; oxidative phosphorylation. Its function is as follows. Component of the cytochrome c oxidase, the last enzyme in the mitochondrial electron transport chain which drives oxidative phosphorylation. The respiratory chain contains 3 multisubunit complexes succinate dehydrogenase (complex II, CII), ubiquinol-cytochrome c oxidoreductase (cytochrome b-c1 complex, complex III, CIII) and cytochrome c oxidase (complex IV, CIV), that cooperate to transfer electrons derived from NADH and succinate to molecular oxygen, creating an electrochemical gradient over the inner membrane that drives transmembrane transport and the ATP synthase. Cytochrome c oxidase is the component of the respiratory chain that catalyzes the reduction of oxygen to water. Electrons originating from reduced cytochrome c in the intermembrane space (IMS) are transferred via the dinuclear copper A center (CU(A)) of subunit 2 and heme A of subunit 1 to the active site in subunit 1, a binuclear center (BNC) formed by heme A3 and copper B (CU(B)). The BNC reduces molecular oxygen to 2 water molecules using 4 electrons from cytochrome c in the IMS and 4 protons from the mitochondrial matrix. The protein is Cytochrome c oxidase subunit 5B, mitochondrial of Solanum tuberosum (Potato).